Here is a 393-residue protein sequence, read N- to C-terminus: 1-deoxy-D-xylulose 5-phosphate reductoisomerase (393 aa).

The NADPH site is built by Thr10, Gly11, Ser12, Ile13, Gln38, and Asn124. Lys125 contacts 1-deoxy-D-xylulose 5-phosphate. Residue Glu126 participates in NADPH binding. Asp150 is a Mn(2+) binding site. Residues Ser151, Glu152, Ser179, and His202 each contribute to the 1-deoxy-D-xylulose 5-phosphate site. Glu152 is a Mn(2+) binding site. Gly208 is an NADPH binding site. 4 residues coordinate 1-deoxy-D-xylulose 5-phosphate: Ser215, Asn220, Lys221, and Glu224. Mn(2+) is bound at residue Glu224.

It belongs to the DXR family. Mg(2+) is required as a cofactor. The cofactor is Mn(2+).

It carries out the reaction 2-C-methyl-D-erythritol 4-phosphate + NADP(+) = 1-deoxy-D-xylulose 5-phosphate + NADPH + H(+). It participates in isoprenoid biosynthesis; isopentenyl diphosphate biosynthesis via DXP pathway; isopentenyl diphosphate from 1-deoxy-D-xylulose 5-phosphate: step 1/6. Catalyzes the NADPH-dependent rearrangement and reduction of 1-deoxy-D-xylulose-5-phosphate (DXP) to 2-C-methyl-D-erythritol 4-phosphate (MEP). The polypeptide is 1-deoxy-D-xylulose 5-phosphate reductoisomerase (Ralstonia nicotianae (strain ATCC BAA-1114 / GMI1000) (Ralstonia solanacearum)).